Here is a 341-residue protein sequence, read N- to C-terminus: HTH-type sugar sensing transcriptional regulator TrmBL1 (341 aa).

A DNA-binding region (H-T-H motif) is located at residues 32-53; the sequence is SKATDVTKESGIPHTRIYDVLS.

Belongs to the transcriptional regulator TrmB family. As to quaternary structure, homotetramer. Forms homooctamers in the presence of maltotriose or maltose.

Its activity is regulated as follows. Repressor activity is regulated by binding of different sugars to TrmBL1. Binding of maltose and maltotriose results in derepression of the target genes. However, high sugar concentration results in formation of octamers with high affinity for DNA, which may prevent transcription of target genes. Its function is as follows. Global transcriptional repressor of the maltodextrin transport gene cluster (mdxE operon) and most likely of all genes encoding glycolytic enzymes. Acts by binding to the conserved TGM (Thermococcales-Glycolytic-Motif) sequences in their promoter region. Can also interact with non-TGM sequences. The sequence is that of HTH-type sugar sensing transcriptional regulator TrmBL1 (trmBL1) from Pyrococcus furiosus (strain ATCC 43587 / DSM 3638 / JCM 8422 / Vc1).